The following is a 289-amino-acid chain: ATP phosphoribosyltransferase (289 aa).

Belongs to the ATP phosphoribosyltransferase family. Long subfamily. The cofactor is Mg(2+).

It localises to the cytoplasm. It carries out the reaction 1-(5-phospho-beta-D-ribosyl)-ATP + diphosphate = 5-phospho-alpha-D-ribose 1-diphosphate + ATP. It participates in amino-acid biosynthesis; L-histidine biosynthesis; L-histidine from 5-phospho-alpha-D-ribose 1-diphosphate: step 1/9. With respect to regulation, feedback inhibited by histidine. Catalyzes the condensation of ATP and 5-phosphoribose 1-diphosphate to form N'-(5'-phosphoribosyl)-ATP (PR-ATP). Has a crucial role in the pathway because the rate of histidine biosynthesis seems to be controlled primarily by regulation of HisG enzymatic activity. The chain is ATP phosphoribosyltransferase from Desulforudis audaxviator (strain MP104C).